The following is a 177-amino-acid chain: Large ribosomal subunit protein uL6 (177 aa).

The segment at 151-177 (YRPPEPYKGKGIRYSDEHVVRKEAKKK) is disordered. Residues 155–177 (EPYKGKGIRYSDEHVVRKEAKKK) are compositionally biased toward basic and acidic residues.

It belongs to the universal ribosomal protein uL6 family. Part of the 50S ribosomal subunit.

Its function is as follows. This protein binds to the 23S rRNA, and is important in its secondary structure. It is located near the subunit interface in the base of the L7/L12 stalk, and near the tRNA binding site of the peptidyltransferase center. The protein is Large ribosomal subunit protein uL6 of Psychrobacter sp. (strain PRwf-1).